The sequence spans 310 residues: tRNA-cytidine(32) 2-sulfurtransferase (310 aa).

A PP-loop motif motif is present at residues 47-52 (SGGKDS). The [4Fe-4S] cluster site is built by cysteine 122, cysteine 125, and cysteine 213.

Belongs to the TtcA family. In terms of assembly, homodimer. The cofactor is Mg(2+). Requires [4Fe-4S] cluster as cofactor.

It is found in the cytoplasm. It catalyses the reaction cytidine(32) in tRNA + S-sulfanyl-L-cysteinyl-[cysteine desulfurase] + AH2 + ATP = 2-thiocytidine(32) in tRNA + L-cysteinyl-[cysteine desulfurase] + A + AMP + diphosphate + H(+). The protein operates within tRNA modification. Functionally, catalyzes the ATP-dependent 2-thiolation of cytidine in position 32 of tRNA, to form 2-thiocytidine (s(2)C32). The sulfur atoms are provided by the cysteine/cysteine desulfurase (IscS) system. This Serratia proteamaculans (strain 568) protein is tRNA-cytidine(32) 2-sulfurtransferase.